Here is a 169-residue protein sequence, read N- to C-terminus: Biogenesis of lysosome-related organelles complex 1 subunit 4 (169 aa).

It belongs to the BLOC1S4 family. In terms of assembly, component of the biogenesis of lysosome-related organelles complex-1 (BLOC-1) composed of Blos1, Blos2, Blos3, Blos4, Dysb, Muted, Pldn and Snapin. Interacts with Pldn.

In terms of biological role, component of the biogenesis of lysosome-related organelles complex-1 (BLOC-1) involved in pigment granule biogenesis. In Drosophila melanogaster (Fruit fly), this protein is Biogenesis of lysosome-related organelles complex 1 subunit 4.